The chain runs to 207 residues: Infectivity protein P11 (207 aa).

A helical transmembrane segment spans residues 13-28 (WWIVAAIGGLAAFLLL). Residues 64-95 (AALQANTQLSAQNAQLQAQMDASRLQLETQLN) are a coiled coil.

Its subcellular location is the virion membrane. Component of the phage ejection machinery. Pilot protein for the formation of the tube that conducts the genome into the target cell. Probably involved in penetration of the bacterial outer membrane and for making the peptidoglycan layer accessible to the viral transglycosylase. Essential for viral infectivity. The sequence is that of Infectivity protein P11 (XI) from Enterobacteria phage PRD1 (Bacteriophage PRD1).